The sequence spans 437 residues: uncharacterized protein (437 aa).

Residues serine 290 and serine 293 each carry the phosphoserine modification. The residue at position 296 (threonine 296) is a Phosphothreonine. Residues serine 418 and serine 428 each carry the phosphoserine modification.

This is an uncharacterized protein from Schizosaccharomyces pombe (strain 972 / ATCC 24843) (Fission yeast).